A 194-amino-acid chain; its full sequence is AP-3 complex subunit sigma (194 aa).

This sequence belongs to the adaptor complexes small subunit family. In terms of assembly, adaptor protein complex 3 (AP-3) is a heterotetramer composed of 2 large adaptins (APL5 and APL6), a medium adaptin (APM3) and a small adaptin (APS3).

It is found in the golgi apparatus. The protein resides in the cytoplasmic vesicle membrane. Its function is as follows. Part of the AP-3 complex, an adaptor-related complex which is not clathrin-associated. The complex is associated with the Golgi region as well as more peripheral structures. It facilitates the budding of vesicles from the Golgi membrane and may be directly involved in trafficking to the vacuole. Required for the transport via the ALP pathway, which directs the transport of the cargo proteins PHO8 and VAM3 to the vacuole. The protein is AP-3 complex subunit sigma (APS3) of Saccharomyces cerevisiae (strain ATCC 204508 / S288c) (Baker's yeast).